We begin with the raw amino-acid sequence, 106 residues long: Putative double-stranded DNA mimic protein VCM66_1163 (106 aa).

The protein belongs to the putative dsDNA mimic protein family.

Its function is as follows. May act as a double-stranded DNA (dsDNA) mimic. Probably regulates the activity of a dsDNA-binding protein. The chain is Putative double-stranded DNA mimic protein VCM66_1163 from Vibrio cholerae serotype O1 (strain M66-2).